A 448-amino-acid chain; its full sequence is tRNA(Ile)-lysidine synthase (448 aa).

25 to 30 contacts ATP; the sequence is SGGSDS.

This sequence belongs to the tRNA(Ile)-lysidine synthase family.

It is found in the cytoplasm. It carries out the reaction cytidine(34) in tRNA(Ile2) + L-lysine + ATP = lysidine(34) in tRNA(Ile2) + AMP + diphosphate + H(+). In terms of biological role, ligates lysine onto the cytidine present at position 34 of the AUA codon-specific tRNA(Ile) that contains the anticodon CAU, in an ATP-dependent manner. Cytidine is converted to lysidine, thus changing the amino acid specificity of the tRNA from methionine to isoleucine. The protein is tRNA(Ile)-lysidine synthase of Brucella suis biovar 1 (strain 1330).